The chain runs to 109 residues: Large ribosomal subunit protein uL22 (109 aa).

The protein belongs to the universal ribosomal protein uL22 family. Part of the 50S ribosomal subunit.

In terms of biological role, this protein binds specifically to 23S rRNA; its binding is stimulated by other ribosomal proteins, e.g. L4, L17, and L20. It is important during the early stages of 50S assembly. It makes multiple contacts with different domains of the 23S rRNA in the assembled 50S subunit and ribosome. Functionally, the globular domain of the protein is located near the polypeptide exit tunnel on the outside of the subunit, while an extended beta-hairpin is found that lines the wall of the exit tunnel in the center of the 70S ribosome. The chain is Large ribosomal subunit protein uL22 from Psychrobacter sp. (strain PRwf-1).